Reading from the N-terminus, the 188-residue chain is V-type proton ATPase subunit E (188 aa).

The protein belongs to the V-ATPase E subunit family.

Produces ATP from ADP in the presence of a proton gradient across the membrane. The protein is V-type proton ATPase subunit E of Dictyoglomus turgidum (strain DSM 6724 / Z-1310).